The sequence spans 463 residues: Argininosuccinate lyase (463 aa).

It belongs to the lyase 1 family. Argininosuccinate lyase subfamily.

It localises to the cytoplasm. It catalyses the reaction 2-(N(omega)-L-arginino)succinate = fumarate + L-arginine. The protein operates within amino-acid biosynthesis; L-arginine biosynthesis; L-arginine from L-ornithine and carbamoyl phosphate: step 3/3. The protein is Argininosuccinate lyase of Dinoroseobacter shibae (strain DSM 16493 / NCIMB 14021 / DFL 12).